The chain runs to 385 residues: Polyketide synthase 4 (385 aa).

Cysteine 157 is an active-site residue.

Belongs to the thiolase-like superfamily. Chalcone/stilbene synthases family. Expressed in glandular trichomes.

It is found in the cytoplasm. Its function is as follows. Polyketide synthase responsible for the biosynthesis of secondary metabolites. This chain is Polyketide synthase 4 (PKSG4), found in Cannabis sativa (Hemp).